Reading from the N-terminus, the 91-residue chain is MARSLKKAPFVDDHLMKKVLAIIENKSPKRPIKTWSRRSTIYPEFIGLTFQVHNGHAFIDVFVTNDMVGHKLGEFAPTRTFNGHGADKGKK.

This sequence belongs to the universal ribosomal protein uS19 family.

Functionally, protein S19 forms a complex with S13 that binds strongly to the 16S ribosomal RNA. The sequence is that of Small ribosomal subunit protein uS19 from Metamycoplasma hominis (strain ATCC 23114 / DSM 25592 / NBRC 14850 / NCTC 10111 / PG21) (Mycoplasma hominis).